A 462-amino-acid chain; its full sequence is Exodeoxyribonuclease 7 large subunit (462 aa).

It belongs to the XseA family. In terms of assembly, heterooligomer composed of large and small subunits.

Its subcellular location is the cytoplasm. It catalyses the reaction Exonucleolytic cleavage in either 5'- to 3'- or 3'- to 5'-direction to yield nucleoside 5'-phosphates.. Functionally, bidirectionally degrades single-stranded DNA into large acid-insoluble oligonucleotides, which are then degraded further into small acid-soluble oligonucleotides. The polypeptide is Exodeoxyribonuclease 7 large subunit (Pectobacterium atrosepticum (strain SCRI 1043 / ATCC BAA-672) (Erwinia carotovora subsp. atroseptica)).